Reading from the N-terminus, the 360-residue chain is Metalloendoproteinase 5-MMP (360 aa).

A signal peptide spans 1-20; sequence MRTLLLTILIFFFTVNPISA. The propeptide at 21–142 is activation peptide; it reads KFYTNVSSIP…GGKILRTTEK (122 aa). N-linked (GlcNAc...) asparagine glycans are attached at residues asparagine 25, asparagine 36, and asparagine 78. Residues 117–124 carry the Cysteine switch motif; that stretch reads PRCGNPDL. Position 119 (cysteine 119) interacts with Zn(2+). 2 N-linked (GlcNAc...) asparagine glycosylation sites follow: asparagine 168 and asparagine 191. Histidine 270 lines the Zn(2+) pocket. The active site involves glutamate 271. The Zn(2+) site is built by histidine 274 and histidine 280. The disordered stretch occupies residues 312 to 336; that stretch reads LYGGNPNGDGGGSKPSRESQSTGGD. Serine 337 is lipidated: GPI-anchor amidated serine. A propeptide spans 338–360 (removed in mature form); the sequence is VRRWRGWMISLSSIATCIFLISV.

This sequence belongs to the peptidase M10A family. Matrix metalloproteinases (MMPs) subfamily. Zn(2+) serves as cofactor. Mostly expressed in leaves, roots and stems, and, to a lower extent, in flowers.

Its subcellular location is the cell membrane. Its activity is regulated as follows. Repressed by acetohydroxamic acid (AHA). Functionally, matrix metalloproteinases (MMPs) or matrixins may play a role in the degradation and remodeling of the extracellular matrix (ECM) during development or in response to stresses. Active on Mca-KESAbuNLFVLKDpaR-NH(2) (QF75) and, to some extent, on McaPLGLDpaAR-NH(2) (QF24), myelin basic protein (MBP) and beta-casein. The polypeptide is Metalloendoproteinase 5-MMP (Arabidopsis thaliana (Mouse-ear cress)).